The primary structure comprises 1638 residues: Chromatin-remodeling ATPase INO80 (1638 aa).

Residues 41 to 93 (SLRKPLSSDEETDDEHVVKREHDVQDSDDSSTVGVVRMKQSSKRKSRLLASKE) are disordered. Phosphoserine is present on residues Ser47 and Ser48. At Thr52 the chain carries Phosphothreonine. Basic and acidic residues predominate over residues 55–65 (EHVVKREHDVQ). A phosphoserine mark is found at Ser67 and Ser70. Positions 136–161 (VQQLLREHVREQRQRKNYYKKAANAQ) form a coiled coil. The interval 201–259 (RLAEAQAGPKPPKQRRRGRKKRDNMGSPESGEVPPSELGKYTFGDTLPNNEDDDEDGGE) is disordered. Basic residues predominate over residues 212–222 (PKQRRRGRKKR). 2 positions are modified to phosphoserine: Ser227 and Ser230. Positions 250-259 (NEDDDEDGGE) are enriched in acidic residues. In terms of domain architecture, DBINO spans 313–438 (IWQIMSKKES…AHFMSKKLGQ (126 aa)). The tract at residues 499 to 528 (KEKEEEEQAQESVEDIKPEPRPEMKDLPQP) is disordered. Residues 502–511 (EEEEQAQESV) show a composition bias toward acidic residues. Positions 512–526 (EDIKPEPRPEMKDLP) are enriched in basic and acidic residues. The region spanning 547-718 (ANIYDQGISG…WALLHFIMPT (172 aa)) is the Helicase ATP-binding domain. ATP is bound at residue 560–567 (DEMGLGKT). Residues 1160 to 1315 (VLDNLLTRLK…GGNFKPDTLK (156 aa)) enclose the Helicase C-terminal domain. 2 disordered regions span residues 1335–1364 (QEAKLQSSSPIPAATQSERKRRHPQKDVNM) and 1463–1638 (FLDD…VGPE). Residues 1338–1350 (KLQSSSPIPAATQ) show a composition bias toward polar residues. Over residues 1473 to 1495 (MRRRHHPRGTRRGRPRGSTRRGG) the composition is skewed to basic residues. 2 stretches are compositionally biased toward low complexity: residues 1505–1534 (TPTQAATPAVPATASQAAAAGTGAAAGTSS) and 1618–1627 (SPATSRAPSP).

The protein belongs to the SNF2/RAD54 helicase family. As to quaternary structure, component of the chromatin remodeling Ino80 complex.

It localises to the nucleus. The enzyme catalyses ATP + H2O = ADP + phosphate + H(+). Its function is as follows. ATPase component of the chromatin remodeling INO80 complex which is involved in transcriptional regulation, DNA replication and DNA repair. Binds DNA. As part of the INO80 complex, remodels chromatin by shifting nucleosomes. This Drosophila melanogaster (Fruit fly) protein is Chromatin-remodeling ATPase INO80.